A 199-amino-acid chain; its full sequence is Tumor protein p53-inducible nuclear protein 2 (199 aa).

An LIR motif is present at residues V26–Q41. Disordered stretches follow at residues Q41–E69, L117–A153, and L173–S199. A compositionally biased stretch (pro residues) spans P47–P64. Position 136 is a phosphoserine (S136).

In terms of assembly, interacts with VMP1, GABARAP, GABARAPL1, GABARAPL2, MAP1LC3A, MAP1LC3B, MAP1LC3C and THRA. In terms of tissue distribution, abundantly expressed in skeletal muscle and heart and expression is highly repressed in muscle from obese diabetic rats.

The protein resides in the cytoplasm. Its subcellular location is the cytosol. It localises to the nucleus. It is found in the PML body. The protein localises to the cytoplasmic vesicle. The protein resides in the autophagosome. In terms of biological role, dual regulator of transcription and autophagy. Positively regulates autophagy and is required for autophagosome formation and processing. May act as a scaffold protein that recruits MAP1LC3A, GABARAP and GABARAPL2 and brings them to the autophagosome membrane by interacting with VMP1 where, in cooperation with the BECN1-PI3-kinase class III complex, they trigger autophagosome development. Acts as a transcriptional activator of THRA. This is Tumor protein p53-inducible nuclear protein 2 (Tp53inp2) from Rattus norvegicus (Rat).